The following is a 391-amino-acid chain: Phosphoglycerate kinase (391 aa).

Substrate contacts are provided by residues 21–23 (DLN), arginine 36, 59–62 (HLGR), arginine 114, and arginine 147. ATP contacts are provided by residues lysine 198, glutamate 315, and 344–347 (GGDT).

The protein belongs to the phosphoglycerate kinase family. As to quaternary structure, monomer.

Its subcellular location is the cytoplasm. The enzyme catalyses (2R)-3-phosphoglycerate + ATP = (2R)-3-phospho-glyceroyl phosphate + ADP. Its pathway is carbohydrate degradation; glycolysis; pyruvate from D-glyceraldehyde 3-phosphate: step 2/5. The polypeptide is Phosphoglycerate kinase (Actinobacillus succinogenes (strain ATCC 55618 / DSM 22257 / CCUG 43843 / 130Z)).